Reading from the N-terminus, the 290-residue chain is Chloride intracellular channel exc-4 (290 aa).

A helical transmembrane segment spans residues 37-57 (LFCQEFWMELYALYEIGVARV).

Belongs to the chloride channel CLIC family. In terms of assembly, monomer. Expressed in the secretory system, hypodermis, vulva, pharyngeal muscle, rectal gland, tubular rectal epithelium cells, and tubular neuronal support cells in the head and tail.

It is found in the cytoplasm. The protein resides in the membrane. Its function is as follows. May insert into membranes and form chloride ion channels. Involved in the formation of the excretory canal. Required to prevent cystic lumenal expansions in the excretory cell. Not required for formation of the initial tube, but is required for regulating the size of the tube lumen as it grows. This is Chloride intracellular channel exc-4 (exc-4) from Caenorhabditis elegans.